Here is a 180-residue protein sequence, read N- to C-terminus: 3-deoxy-D-manno-octulosonate 8-phosphate phosphatase KdsC (180 aa).

Positions 14 and 16 each coordinate Mg(2+). Residues D16, 37 to 41 (HVRDG), K45, R60, R68, and K84 each bind substrate. D107 is a binding site for Mg(2+).

This sequence belongs to the KdsC family. Homotetramer. The cofactor is Mg(2+).

The catalysed reaction is 3-deoxy-alpha-D-manno-2-octulosonate-8-phosphate + H2O = 3-deoxy-alpha-D-manno-oct-2-ulosonate + phosphate. Functionally, catalyzes the hydrolysis of 3-deoxy-D-manno-octulosonate 8-phosphate (KDO 8-P) to 3-deoxy-D-manno-octulosonate (KDO) and inorganic phosphate. The polypeptide is 3-deoxy-D-manno-octulosonate 8-phosphate phosphatase KdsC (Haemophilus influenzae (strain ATCC 51907 / DSM 11121 / KW20 / Rd)).